We begin with the raw amino-acid sequence, 382 residues long: Dual-specificity RNA methyltransferase RlmN (382 aa).

Glutamate 95 (proton acceptor) is an active-site residue. The Radical SAM core domain maps to 101–348 (EDDRGTLCIS…TTVRKTRGDD (248 aa)). Cysteine 108 and cysteine 353 are joined by a disulfide. [4Fe-4S] cluster is bound by residues cysteine 115, cysteine 119, and cysteine 122. S-adenosyl-L-methionine is bound by residues 179-180 (GE), serine 211, 233-235 (SLH), and asparagine 310. Cysteine 353 serves as the catalytic S-methylcysteine intermediate.

Belongs to the radical SAM superfamily. RlmN family. It depends on [4Fe-4S] cluster as a cofactor.

The protein resides in the cytoplasm. It catalyses the reaction adenosine(2503) in 23S rRNA + 2 reduced [2Fe-2S]-[ferredoxin] + 2 S-adenosyl-L-methionine = 2-methyladenosine(2503) in 23S rRNA + 5'-deoxyadenosine + L-methionine + 2 oxidized [2Fe-2S]-[ferredoxin] + S-adenosyl-L-homocysteine. It carries out the reaction adenosine(37) in tRNA + 2 reduced [2Fe-2S]-[ferredoxin] + 2 S-adenosyl-L-methionine = 2-methyladenosine(37) in tRNA + 5'-deoxyadenosine + L-methionine + 2 oxidized [2Fe-2S]-[ferredoxin] + S-adenosyl-L-homocysteine. Functionally, specifically methylates position 2 of adenine 2503 in 23S rRNA and position 2 of adenine 37 in tRNAs. m2A2503 modification seems to play a crucial role in the proofreading step occurring at the peptidyl transferase center and thus would serve to optimize ribosomal fidelity. In Bordetella parapertussis (strain 12822 / ATCC BAA-587 / NCTC 13253), this protein is Dual-specificity RNA methyltransferase RlmN.